We begin with the raw amino-acid sequence, 396 residues long: Na(+)/H(+) antiporter NhaA 1 (396 aa).

Transmembrane regions (helical) follow at residues 18-38 (LLLI…LSWL), 60-80 (LLLW…GLEV), 95-115 (IALP…IYTG), 126-146 (GWAI…ALLG), 155-175 (LFLL…IALF), 178-198 (ADLS…LFIL), 201-221 (TGVT…ICVL), 262-282 (VAYG…LAGI), 295-315 (IAAG…WIGV), 333-353 (GMAV…TLAL), and 362-382 (AARL…YYLL).

This sequence belongs to the NhaA Na(+)/H(+) (TC 2.A.33) antiporter family.

The protein localises to the cell inner membrane. The catalysed reaction is Na(+)(in) + 2 H(+)(out) = Na(+)(out) + 2 H(+)(in). Na(+)/H(+) antiporter that extrudes sodium in exchange for external protons. The polypeptide is Na(+)/H(+) antiporter NhaA 1 (Syntrophotalea carbinolica (strain DSM 2380 / NBRC 103641 / GraBd1) (Pelobacter carbinolicus)).